The chain runs to 140 residues: Large ribosomal subunit protein uL11 (140 aa).

The protein belongs to the universal ribosomal protein uL11 family. Part of the ribosomal stalk of the 50S ribosomal subunit. Interacts with L10 and the large rRNA to form the base of the stalk. L10 forms an elongated spine to which L12 dimers bind in a sequential fashion forming a multimeric L10(L12)X complex. In terms of processing, one or more lysine residues are methylated.

Forms part of the ribosomal stalk which helps the ribosome interact with GTP-bound translation factors. In Karelsulcia muelleri (strain GWSS) (Sulcia muelleri), this protein is Large ribosomal subunit protein uL11.